The following is a 140-amino-acid chain: MAFSSGNSGGPMADINVTPLVDVMLVLLIIFIITAPLMSHKVKVELPEANLIQKEDAEKRAAPITLAVKEDGSLYWNDEPISKEALESRLSTAAQQTPQPPLNLRGDRTTKMRTINEITKIAQGQGMLDVGFVATKEKGQ.

Residues 1-16 lie on the Cytoplasmic side of the membrane; that stretch reads MAFSSGNSGGPMADIN. A helical transmembrane segment spans residues 17-37; it reads VTPLVDVMLVLLIIFIITAPL. The Periplasmic segment spans residues 38-140; the sequence is MSHKVKVELP…GFVATKEKGQ (103 aa).

The protein belongs to the ExbD/TolR family. The accessory proteins ExbB and ExbD seem to form a complex with TonB.

The protein resides in the cell inner membrane. Its function is as follows. Involved in the TonB-dependent energy-dependent transport of various receptor-bound substrates. This is Biopolymer transport protein exbD1 (exbD1) from Xanthomonas campestris pv. campestris (strain B100).